Consider the following 121-residue polypeptide: Small ribosomal subunit protein uS12c (121 aa).

The protein belongs to the universal ribosomal protein uS12 family. As to quaternary structure, part of the 30S ribosomal subunit.

The protein localises to the plastid. It localises to the chloroplast. In terms of biological role, with S4 and S5 plays an important role in translational accuracy. Located at the interface of the 30S and 50S subunits. The protein is Small ribosomal subunit protein uS12c (rps12) of Bigelowiella natans (Pedinomonas minutissima).